The primary structure comprises 76 residues: uncharacterized protein (76 aa).

Residues 1–15 (MYLPLLLFCVISCYG) form the signal peptide.

This is an uncharacterized protein from Magallana gigas (Pacific oyster).